The chain runs to 286 residues: Light-independent protochlorophyllide reductase iron-sulfur ATP-binding protein (286 aa).

ATP-binding positions include 10–15 (GIGKST) and lysine 39. Serine 14 is a Mg(2+) binding site. The [4Fe-4S] cluster site is built by cysteine 95 and cysteine 129. 180–181 (NR) is an ATP binding site.

This sequence belongs to the NifH/BchL/ChlL family. Homodimer. Protochlorophyllide reductase is composed of three subunits; ChlL, ChlN and ChlB. [4Fe-4S] cluster serves as cofactor.

It catalyses the reaction chlorophyllide a + oxidized 2[4Fe-4S]-[ferredoxin] + 2 ADP + 2 phosphate = protochlorophyllide a + reduced 2[4Fe-4S]-[ferredoxin] + 2 ATP + 2 H2O. Its pathway is porphyrin-containing compound metabolism; chlorophyll biosynthesis (light-independent). In terms of biological role, component of the dark-operative protochlorophyllide reductase (DPOR) that uses Mg-ATP and reduced ferredoxin to reduce ring D of protochlorophyllide (Pchlide) to form chlorophyllide a (Chlide). This reaction is light-independent. The L component serves as a unique electron donor to the NB-component of the complex, and binds Mg-ATP. The protein is Light-independent protochlorophyllide reductase iron-sulfur ATP-binding protein of Synechococcus elongatus (strain ATCC 33912 / PCC 7942 / FACHB-805) (Anacystis nidulans R2).